We begin with the raw amino-acid sequence, 93 residues long: Putative regulatory protein Cthe_1316 (93 aa).

The interval 74 to 93 is disordered; the sequence is RLNTKEAEDVEVDDEEEIDE. Acidic residues predominate over residues 81–93; it reads EDVEVDDEEEIDE.

Belongs to the RemA family.

In Acetivibrio thermocellus (strain ATCC 27405 / DSM 1237 / JCM 9322 / NBRC 103400 / NCIMB 10682 / NRRL B-4536 / VPI 7372) (Clostridium thermocellum), this protein is Putative regulatory protein Cthe_1316.